A 353-amino-acid chain; its full sequence is Photosystem II D2 protein (353 aa).

T2 carries the post-translational modification N-acetylthreonine. The residue at position 2 (T2) is a Phosphothreonine. A helical membrane pass occupies residues 41 to 61; sequence CAYFALGGWFTGTTFVTSWYT. Position 118 (H118) interacts with chlorophyll a. The chain crosses the membrane as a helical span at residues 125-141; that stretch reads GFMLRQFELARSVQLRP. The pheophytin a site is built by Q130 and N143. A helical transmembrane segment spans residues 153–166; that stretch reads VFVSVFLIYPLGQS. H198 is a binding site for chlorophyll a. A helical transmembrane segment spans residues 208 to 228; sequence AALLCAIHGATVENLYFEDGD. A plastoquinone-binding residues include H215 and F262. H215 lines the Fe cation pocket. A Fe cation-binding site is contributed by H269. The helical transmembrane segment at 279-295 threads the bilayer; that stretch reads GLWMSALGVVGLALNLR.

It belongs to the reaction center PufL/M/PsbA/D family. PSII is composed of 1 copy each of membrane proteins PsbA, PsbB, PsbC, PsbD, PsbE, PsbF, PsbH, PsbI, PsbJ, PsbK, PsbL, PsbM, PsbT, PsbX, PsbY, PsbZ, Psb30/Ycf12, at least 3 peripheral proteins of the oxygen-evolving complex and a large number of cofactors. It forms dimeric complexes. The cofactor is The D1/D2 heterodimer binds P680, chlorophylls that are the primary electron donor of PSII, and subsequent electron acceptors. It shares a non-heme iron and each subunit binds pheophytin, quinone, additional chlorophylls, carotenoids and lipids. There is also a Cl(-1) ion associated with D1 and D2, which is required for oxygen evolution. The PSII complex binds additional chlorophylls, carotenoids and specific lipids..

Its subcellular location is the plastid. It is found in the chloroplast thylakoid membrane. It carries out the reaction 2 a plastoquinone + 4 hnu + 2 H2O = 2 a plastoquinol + O2. Its function is as follows. Photosystem II (PSII) is a light-driven water:plastoquinone oxidoreductase that uses light energy to abstract electrons from H(2)O, generating O(2) and a proton gradient subsequently used for ATP formation. It consists of a core antenna complex that captures photons, and an electron transfer chain that converts photonic excitation into a charge separation. The D1/D2 (PsbA/PsbD) reaction center heterodimer binds P680, the primary electron donor of PSII as well as several subsequent electron acceptors. D2 is needed for assembly of a stable PSII complex. The polypeptide is Photosystem II D2 protein (Panax ginseng (Korean ginseng)).